Here is a 483-residue protein sequence, read N- to C-terminus: 6-phosphogluconate dehydrogenase, decarboxylating (483 aa).

Residues 10–15 (GLAVMG) and 33–35 (NRT) each bind NADP(+). K38 bears the N6-acetyllysine mark. S57 carries the post-translational modification Phosphoserine. NADP(+) is bound by residues 75-77 (VKA) and N103. The substrate site is built by N103, S129, and G131. S129 bears the Phosphoserine mark. Catalysis depends on K184, which acts as the Proton acceptor. 187–188 (HN) is a binding site for substrate. Catalysis depends on E191, which acts as the Proton donor. Residues Y192, K261, R288, R447, and H453 each contribute to the substrate site. 478 to 481 (SSSY) serves as a coordination point for NADP(+).

Belongs to the 6-phosphogluconate dehydrogenase family. In terms of assembly, homodimer.

The protein localises to the cytoplasm. The enzyme catalyses 6-phospho-D-gluconate + NADP(+) = D-ribulose 5-phosphate + CO2 + NADPH. It participates in carbohydrate degradation; pentose phosphate pathway; D-ribulose 5-phosphate from D-glucose 6-phosphate (oxidative stage): step 3/3. Catalyzes the oxidative decarboxylation of 6-phosphogluconate to ribulose 5-phosphate and CO(2), with concomitant reduction of NADP to NADPH. The chain is 6-phosphogluconate dehydrogenase, decarboxylating (PGD) from Ovis aries (Sheep).